The following is a 280-amino-acid chain: Putative pyruvate, phosphate dikinase regulatory protein (280 aa).

153 to 160 (GISRTSKT) lines the ADP pocket.

Belongs to the pyruvate, phosphate/water dikinase regulatory protein family. PDRP subfamily.

It carries out the reaction N(tele)-phospho-L-histidyl/L-threonyl-[pyruvate, phosphate dikinase] + ADP = N(tele)-phospho-L-histidyl/O-phospho-L-threonyl-[pyruvate, phosphate dikinase] + AMP + H(+). The catalysed reaction is N(tele)-phospho-L-histidyl/O-phospho-L-threonyl-[pyruvate, phosphate dikinase] + phosphate + H(+) = N(tele)-phospho-L-histidyl/L-threonyl-[pyruvate, phosphate dikinase] + diphosphate. Bifunctional serine/threonine kinase and phosphorylase involved in the regulation of the pyruvate, phosphate dikinase (PPDK) by catalyzing its phosphorylation/dephosphorylation. The protein is Putative pyruvate, phosphate dikinase regulatory protein of Bartonella quintana (strain Toulouse) (Rochalimaea quintana).